We begin with the raw amino-acid sequence, 296 residues long: Large ribosomal subunit protein uL15m (296 aa).

A mitochondrion-targeting transit peptide spans 1–20; it reads MAASGGSGGKATELLRCLPR. Positions 25 to 66 are disordered; it reads NLRPNPGARHREKRRGRGIHGGRKSGRGHKGETQRGNQPRLG. Basic residues predominate over residues 32 to 52; the sequence is ARHREKRRGRGIHGGRKSGRG.

This sequence belongs to the universal ribosomal protein uL15 family. Component of the mitochondrial ribosome large subunit (39S) which comprises a 16S rRNA and about 50 distinct proteins.

The protein localises to the mitochondrion. This chain is Large ribosomal subunit protein uL15m (mrpl15), found in Xenopus laevis (African clawed frog).